Consider the following 472-residue polypeptide: Glutamate--tRNA ligase 1 (472 aa).

Positions 13–23 match the 'HIGH' region motif; it reads PSPTGYLHIGG. 4 residues coordinate Zn(2+): C102, C104, C129, and E131. The 'KMSKS' region motif lies at 239 to 243; the sequence is RLSKR. K242 serves as a coordination point for ATP.

Belongs to the class-I aminoacyl-tRNA synthetase family. Glutamate--tRNA ligase type 1 subfamily. As to quaternary structure, monomer. Requires Zn(2+) as cofactor.

It is found in the cytoplasm. It carries out the reaction tRNA(Glu) + L-glutamate + ATP = L-glutamyl-tRNA(Glu) + AMP + diphosphate. In terms of biological role, catalyzes the attachment of glutamate to tRNA(Glu) in a two-step reaction: glutamate is first activated by ATP to form Glu-AMP and then transferred to the acceptor end of tRNA(Glu). This chain is Glutamate--tRNA ligase 1, found in Syntrophus aciditrophicus (strain SB).